Consider the following 199-residue polypeptide: MAKVLVLYYSMYGHIETMANTVAEGARGVDGADVVVKRVPETMADEAFLNAGGKADQGAPVADPKELADYDAIIFGTPTRFGNMAGQMRTFLDQTGGLWAEGKLHGKVGSVFTSTGTGGGQEQTITSFWTTLAHHGMVLVPLGYGIPEFFDISEVNGGTPYGASTIAGGDGSRQPSEKELAIARFQGKHVAELAIKLHG.

The region spanning 4-190 (VLVLYYSMYG…AIARFQGKHV (187 aa)) is the Flavodoxin-like domain. Residues 10-15 (SMYGHI) and 79-81 (TRF) contribute to the FMN site. Y12 lines the NAD(+) pocket. Position 99 (W99) interacts with substrate. FMN is bound by residues 114–119 (STGTGG) and H134.

Belongs to the WrbA family. The cofactor is FMN.

The enzyme catalyses a quinone + NADH + H(+) = a quinol + NAD(+). It carries out the reaction a quinone + NADPH + H(+) = a quinol + NADP(+). This chain is NAD(P)H dehydrogenase (quinone), found in Marinobacter nauticus (strain ATCC 700491 / DSM 11845 / VT8) (Marinobacter aquaeolei).